The chain runs to 152 residues: Large ribosomal subunit protein uL22 (152 aa).

Over residues 124 to 145 (APKKAAAKKAAPAKETTPAATE) the composition is skewed to low complexity. The disordered stretch occupies residues 124–152 (APKKAAAKKAAPAKETTPAATESKTEGAE).

Belongs to the universal ribosomal protein uL22 family. Part of the 50S ribosomal subunit.

In terms of biological role, this protein binds specifically to 23S rRNA; its binding is stimulated by other ribosomal proteins, e.g. L4, L17, and L20. It is important during the early stages of 50S assembly. It makes multiple contacts with different domains of the 23S rRNA in the assembled 50S subunit and ribosome. The globular domain of the protein is located near the polypeptide exit tunnel on the outside of the subunit, while an extended beta-hairpin is found that lines the wall of the exit tunnel in the center of the 70S ribosome. This is Large ribosomal subunit protein uL22 from Salinispora tropica (strain ATCC BAA-916 / DSM 44818 / JCM 13857 / NBRC 105044 / CNB-440).